Consider the following 325-residue polypeptide: Germination protease (325 aa).

Residues 1–7 constitute a propeptide that is removed on maturation; sequence MYNVRTD.

This sequence belongs to the peptidase A25 family. In terms of assembly, homotetramer. Post-translationally, autoproteolytically processed. The inactive tetrameric zymogen termed p46 autoprocesses to a smaller form termed p41, which is active only during spore germination.

The catalysed reaction is Endopeptidase action with P4 Glu or Asp, P1 preferably Glu &gt; Asp, P1' hydrophobic and P2' Ala.. Initiates the rapid degradation of small, acid-soluble proteins during spore germination. The polypeptide is Germination protease (Clostridium perfringens (strain SM101 / Type A)).